The sequence spans 280 residues: Pantothenate synthetase (280 aa).

26–33 is a binding site for ATP; the sequence is MGNLHDGH. His-33 acts as the Proton donor in catalysis. Gln-57 is a binding site for (R)-pantoate. A beta-alanine-binding site is contributed by Gln-57. 147 to 150 is a binding site for ATP; that stretch reads GKKD. Gln-153 is a binding site for (R)-pantoate. Residue 184–187 participates in ATP binding; sequence LSSR.

It belongs to the pantothenate synthetase family. In terms of assembly, homodimer.

The protein resides in the cytoplasm. It catalyses the reaction (R)-pantoate + beta-alanine + ATP = (R)-pantothenate + AMP + diphosphate + H(+). Its pathway is cofactor biosynthesis; (R)-pantothenate biosynthesis; (R)-pantothenate from (R)-pantoate and beta-alanine: step 1/1. Catalyzes the condensation of pantoate with beta-alanine in an ATP-dependent reaction via a pantoyl-adenylate intermediate. In Verminephrobacter eiseniae (strain EF01-2), this protein is Pantothenate synthetase.